Here is a 366-residue protein sequence, read N- to C-terminus: tRNA 2-selenouridine synthase (366 aa).

A Rhodanese domain is found at 12 to 136 (FLSGTPMMDV…MRGFLIDVIE (125 aa)). The active-site S-selanylcysteine intermediate is the Cys-95.

This sequence belongs to the SelU family. Monomer.

The catalysed reaction is 5-methylaminomethyl-2-thiouridine(34) in tRNA + selenophosphate + (2E)-geranyl diphosphate + H2O + H(+) = 5-methylaminomethyl-2-selenouridine(34) in tRNA + (2E)-thiogeraniol + phosphate + diphosphate. It catalyses the reaction 5-methylaminomethyl-2-thiouridine(34) in tRNA + (2E)-geranyl diphosphate = 5-methylaminomethyl-S-(2E)-geranyl-thiouridine(34) in tRNA + diphosphate. It carries out the reaction 5-methylaminomethyl-S-(2E)-geranyl-thiouridine(34) in tRNA + selenophosphate + H(+) = 5-methylaminomethyl-2-(Se-phospho)selenouridine(34) in tRNA + (2E)-thiogeraniol. The enzyme catalyses 5-methylaminomethyl-2-(Se-phospho)selenouridine(34) in tRNA + H2O = 5-methylaminomethyl-2-selenouridine(34) in tRNA + phosphate. In terms of biological role, involved in the post-transcriptional modification of the uridine at the wobble position (U34) of tRNA(Lys), tRNA(Glu) and tRNA(Gln). Catalyzes the conversion of 2-thiouridine (S2U-RNA) to 2-selenouridine (Se2U-RNA). Acts in a two-step process involving geranylation of 2-thiouridine (S2U) to S-geranyl-2-thiouridine (geS2U) and subsequent selenation of the latter derivative to 2-selenouridine (Se2U) in the tRNA chain. The sequence is that of tRNA 2-selenouridine synthase from Cupriavidus pinatubonensis (strain JMP 134 / LMG 1197) (Cupriavidus necator (strain JMP 134)).